A 288-amino-acid chain; its full sequence is Beta-lactamase CARB-3 (288 aa).

The N-terminal stretch at 1 to 17 (MKFLLAFSLLIPSVVFA) is a signal peptide. Ser65 functions as the Acyl-ester intermediate in the catalytic mechanism. A disulfide bond links Cys72 and Cys118. 229–231 (RSG) serves as a coordination point for substrate.

This sequence belongs to the class-A beta-lactamase family.

It catalyses the reaction a beta-lactam + H2O = a substituted beta-amino acid. Its function is as follows. Hydrolyzes both carbenicillin and oxacillin. In Pseudomonas aeruginosa, this protein is Beta-lactamase CARB-3 (carB3).